A 510-amino-acid polypeptide reads, in one-letter code: Secreted RxLR effector protein 108 (510 aa).

The first 20 residues, 1-20 (MRGAYYVLTALFVVTSSDIA), serve as a signal peptide directing secretion. An N-linked (GlcNAc...) asparagine glycan is attached at Asn47. A RxLR-dEER motif is present at residues 48–65 (RSLRGSRDGRNDLANEER). Disordered stretches follow at residues 111–139 (RAAK…AKKT) and 386–442 (KRSR…DDPK). The span at 122–137 (PAKAAKKTPRAAKAAK) shows a compositional bias: basic residues. The span at 393-405 (DGNTDTASLPSKQ) shows a compositional bias: polar residues. Residues 429 to 442 (VPTKEIKSSFDDPK) show a composition bias toward basic and acidic residues.

The protein belongs to the RxLR effector family.

Its subcellular location is the secreted. The protein resides in the host nucleus. In terms of biological role, secreted effector that completely suppresses the host cell death induced by cell death-inducing proteins. This Plasmopara viticola (Downy mildew of grapevine) protein is Secreted RxLR effector protein 108.